Reading from the N-terminus, the 2403-residue chain is Highly reducing polyketide synthase fogA (2403 aa).

A Ketosynthase family 3 (KS3) domain is found at 3 to 428; the sequence is DDPPCIVGMA…GANAHVILES (426 aa). Catalysis depends on for beta-ketoacyl synthase activity residues Cys176, His311, and His350. Positions 538 to 858 are malonyl-CoA:ACP transacylase (MAT) domain; sequence VFTGQGAQYA…PYAPSLVRKE (321 aa). Ser632 functions as the For malonyltransferase activity in the catalytic mechanism. The tract at residues 929–1068 is N-terminal hotdog fold; the sequence is HELLGTFALT…GSIRVVEPLT (140 aa). A dehydratase (DH) domain region spans residues 929-1238; sequence HELLGTFALT…DARMSLYTGK (310 aa). A PKS/mFAS DH domain is found at 929-1241; sequence HELLGTFALT…MSLYTGKSSA (313 aa). The active-site Proton acceptor; for dehydratase activity is His961. The interval 1084-1241 is C-terminal hotdog fold; it reads SFEASPTNRW…MSLYTGKSSA (158 aa). The active-site Proton donor; for dehydratase activity is Asp1152. Residues 1663–1981 form an enoyl reductase (ER) domain region; sequence GATDSMFFQQ…QQDRIGKIVI (319 aa). Residues 2006-2185 are ketoreductase (KR) domain; the sequence is VYLLIGCLGG…AVAVGLGMIS (180 aa). A disordered region spans residues 2280–2300; the sequence is AQNSTSSSGSNSNTPTTAAPW. The segment covering 2282–2296 has biased composition (low complexity); that stretch reads NSTSSSGSNSNTPTT. The Carrier domain occupies 2320-2398; it reads SLNAAILRLI…GLAVVVEGKL (79 aa). Ser2357 carries the post-translational modification O-(pantetheine 4'-phosphoryl)serine.

Requires pantetheine 4'-phosphate as cofactor.

It functions in the pathway secondary metabolite biosynthesis. Highly reducing polyketide synthase; part of the gene cluster that mediates the biosynthesis of flavoglaucin and congeners (including aspergin, dihydroauroglaucin and auroglaucin), prenylated salicylaldehyde derivatives carrying a saturated or an unsaturated C-7 side chain. FogA releases the carboxylic acid (8E,10E,12E)-3,5,7-trihydroxytetradeca-8,10,12-trienoic acid as its product, as well as derivatives with one and two double bonds. FogA is indeed able to reduce the initial triketide, thus being at least partially responsible for the differently saturated heptyl side chains of flavoglaucin congeners. The oxidoreductases fogB, fogC and fogD modify the nascent polyketide in fogA-bound form and, together, fogA, fogB, fogC and fogD are necessary for the formation of the aromatic core and the cyclized PKS products are released as salicyl alcohols. In particular, fogB is responsible for oxidation of a hydroxyl group or reduction of remaining double bond(s) at the C-7 residue whereas fogD is probably involved in the reductive release of the modified PKS products. The cytochrome P450 monooxygenase fogE is then responsible for the hydroxylation at C-3 of the benzene ring. The fogE products are substrates of the prenyltransferase fogH and the prenylated benzyl alcohols are subsequently oxidized by the fogF to produce the final aryl aldehydes flavoglaucin and congeners. The short-chain dehydrogenase fogG does not seem to be involved in the biosynthesis of the prenylated salicylaldehyde derivatives. This is Highly reducing polyketide synthase fogA from Aspergillus ruber (strain CBS 135680).